The primary structure comprises 704 residues: D-(-)-3-hydroxybutyrate oligomer hydrolase (704 aa).

The N-terminal stretch at 1-31 (MTTTNRNNLKLTALTAAVLTLSACGGSDAVA) is a signal peptide. The active-site Charge relay system is Ser-309.

It belongs to the D-(-)-3-hydroxybutyrate oligomer hydrolase family.

Its subcellular location is the secreted. It catalyses the reaction (3R)-hydroxybutanoate dimer + H2O = 2 (R)-3-hydroxybutanoate + H(+). Its pathway is lipid metabolism; butanoate metabolism. Its function is as follows. Participates in the degradation of poly-3-hydroxybutyrate (PHB). It works downstream of poly(3-hydroxybutyrate) depolymerase, hydrolyzing D(-)-3-hydroxybutyrate oligomers of various length (3HB-oligomers) into 3HB-monomers. In Albidiferax ferrireducens (strain ATCC BAA-621 / DSM 15236 / T118) (Rhodoferax ferrireducens), this protein is D-(-)-3-hydroxybutyrate oligomer hydrolase.